We begin with the raw amino-acid sequence, 486 residues long: MRAIHIVTTRLSSSFRPILLLDLVSSCSPPRQFSIPRRLICAAANGGGRSGSIVAPLVTEEDFHKKIDVNPPKGTRDFPPEDMRLRNWLFNHFKEVSRLYGYEEVDYPVLETEALFIRKAGEEIRDQLYCFEDRGNRRVALRPELTPSLARLVIQKGKSVSLPLKWFAIGQCWRYERMTRGRRREHYQWNMDIIGVPQVTAEAELISSIVTFFKRIGITASDVGFKVSSRKVLQELLKKYGVPEDLFGRVCIIIDKIEKIPIDEIKKELGFTGISEDAIEQLLQVLSVKSLDDLEDIIGGAGEAIADLKQLFSLAEKFGYSEWIQFDASVVRGLAYYTGIVFEGFDRKGKLRAICGGGRYDRLLSTYGGDDFPACGFGFGDAVIVELLKEKDLLPELGQEVENIVCALDKDLQGAAATVATALRDKGQTVDLVLESKPLKWVFKRAARVNARRLVLVGKTEWEDGSVSVKVLSSGEQFQVKLSDLE.

This sequence belongs to the class-II aminoacyl-tRNA synthetase family.

The protein localises to the plastid. It is found in the chloroplast. It localises to the mitochondrion. It catalyses the reaction tRNA(His) + L-histidine + ATP = L-histidyl-tRNA(His) + AMP + diphosphate + H(+). In Arabidopsis thaliana (Mouse-ear cress), this protein is Histidine--tRNA ligase, chloroplastic/mitochondrial.